An 838-amino-acid chain; its full sequence is Urease (838 aa).

The 437-residue stretch at 402–838 (GGFDTHIHFI…LPLTQDYFVY (437 aa)) folds into the Urease domain. Histidine 407, histidine 409, and lysine 490 together coordinate Ni(2+). Lysine 490 bears the N6-carboxylysine mark. Histidine 492 is a substrate binding site. Residues histidine 519 and histidine 545 each contribute to the Ni(2+) site. The active-site Proton donor is histidine 593. Aspartate 633 serves as a coordination point for Ni(2+).

The protein in the C-terminal section; belongs to the metallo-dependent hydrolases superfamily. Urease alpha subunit family. In terms of assembly, homohexamer. It depends on Ni cation as a cofactor. In terms of processing, carboxylation allows a single lysine to coordinate two nickel ions.

It catalyses the reaction urea + 2 H2O + H(+) = hydrogencarbonate + 2 NH4(+). Its pathway is nitrogen metabolism; urea degradation; CO(2) and NH(3) from urea (urease route): step 1/1. This Aspergillus fumigatus (strain ATCC MYA-4609 / CBS 101355 / FGSC A1100 / Af293) (Neosartorya fumigata) protein is Urease (ure1).